The primary structure comprises 87 residues: Acyl-CoA-binding protein (87 aa).

Serine 2 is subject to N-acetylserine. One can recognise an ACB domain in the interval 2–87 (SQAEFDKAAE…VEDLKKKYGI (86 aa)). Lysine 8 carries the post-translational modification N6-acetyllysine; alternate. At lysine 8 the chain carries N6-succinyllysine; alternate. An acyl-CoA is bound at residue lysine 14. Lysine 17 carries the N6-succinyllysine modification. Lysine 19 carries the N6-acetyllysine modification. Tyrosine 29 carries the post-translational modification Phosphotyrosine. Residues 29–33 (YSHYK), lysine 55, and tyrosine 74 each bind an acyl-CoA. Residue lysine 55 is modified to N6-acetyllysine; alternate. Lysine 55 carries the N6-succinyllysine; alternate modification. Lysine 55 bears the N6-(2-hydroxyisobutyryl)lysine; alternate mark. Lysine 55 bears the N6-malonyllysine; alternate mark. Lysine 77 carries the N6-acetyllysine; alternate modification. The residue at position 77 (lysine 77) is an N6-succinyllysine; alternate.

The protein belongs to the ACBP family. Monomer.

The protein resides in the endoplasmic reticulum. It localises to the golgi apparatus. Binds medium- and long-chain acyl-CoA esters with very high affinity and may function as an intracellular carrier of acyl-CoA esters. The chain is Acyl-CoA-binding protein (DBI) from Canis lupus familiaris (Dog).